The following is a 253-amino-acid chain: 5-oxoprolinase subunit A (253 aa).

Belongs to the LamB/PxpA family. In terms of assembly, forms a complex composed of PxpA, PxpB and PxpC.

It catalyses the reaction 5-oxo-L-proline + ATP + 2 H2O = L-glutamate + ADP + phosphate + H(+). Catalyzes the cleavage of 5-oxoproline to form L-glutamate coupled to the hydrolysis of ATP to ADP and inorganic phosphate. The sequence is that of 5-oxoprolinase subunit A from Bacillus cereus (strain Q1).